A 90-amino-acid chain; its full sequence is Small ribosomal subunit protein bS20 (90 aa).

This sequence belongs to the bacterial ribosomal protein bS20 family.

Its function is as follows. Binds directly to 16S ribosomal RNA. This chain is Small ribosomal subunit protein bS20, found in Rickettsia akari (strain Hartford).